The following is a 279-amino-acid chain: Probable ribosomal RNA small subunit methyltransferase A (279 aa).

S-adenosyl-L-methionine is bound by residues Asn23, Leu25, Gly50, Glu71, Asp95, and Asn110.

It belongs to the class I-like SAM-binding methyltransferase superfamily. rRNA adenine N(6)-methyltransferase family. RsmA subfamily.

The protein resides in the cytoplasm. Its function is as follows. Specifically dimethylates two adjacent adenosines in the loop of a conserved hairpin near the 3'-end of 16S rRNA in the 30S particle. May play a critical role in biogenesis of 30S subunits. In Thermococcus kodakarensis (strain ATCC BAA-918 / JCM 12380 / KOD1) (Pyrococcus kodakaraensis (strain KOD1)), this protein is Probable ribosomal RNA small subunit methyltransferase A.